The primary structure comprises 144 residues: Probable copper-binding protein PcoE (144 aa).

Positions 1 to 20 are cleaved as a signal peptide; sequence MKKILVSFVAIMAVASSAMA. The interval 86–144 is disordered; sequence MHKKMMKSKPAASNETAKSFSEMNEHEKSAVVHEKANNGQSSVIHQQQAEKHRSQITQN. Over residues 96-107 the composition is skewed to polar residues; the sequence is AASNETAKSFSE. Over residues 108-121 the composition is skewed to basic and acidic residues; it reads MNEHEKSAVVHEKA. Residues 122–132 show a composition bias toward polar residues; it reads NNGQSSVIHQQ.

This sequence to S.typhimurium SilE.

It is found in the periplasm. Its function is as follows. Required for the copper-inducible expression of copper resistance. Activated by the two-component regulatory system CusS/CusR. In Escherichia coli, this protein is Probable copper-binding protein PcoE (pcoE).